Reading from the N-terminus, the 505-residue chain is UDP-N-acetylmuramoyl-L-alanyl-D-glutamate--2,6-diaminopimelate ligase (505 aa).

S42 serves as a coordination point for UDP-N-acetyl-alpha-D-muramoyl-L-alanyl-D-glutamate. 126-132 (GTNGKTT) serves as a coordination point for ATP. UDP-N-acetyl-alpha-D-muramoyl-L-alanyl-D-glutamate is bound by residues 168 to 169 (TT), S195, Q201, and R203. Position 235 is an N6-carboxylysine (K235). Meso-2,6-diaminopimelate-binding positions include R399, 423–426 (DNPR), G474, and E478. Residues 423–426 (DNPR) carry the Meso-diaminopimelate recognition motif motif.

The protein belongs to the MurCDEF family. MurE subfamily. Mg(2+) is required as a cofactor. In terms of processing, carboxylation is probably crucial for Mg(2+) binding and, consequently, for the gamma-phosphate positioning of ATP.

The protein localises to the cytoplasm. It carries out the reaction UDP-N-acetyl-alpha-D-muramoyl-L-alanyl-D-glutamate + meso-2,6-diaminopimelate + ATP = UDP-N-acetyl-alpha-D-muramoyl-L-alanyl-gamma-D-glutamyl-meso-2,6-diaminopimelate + ADP + phosphate + H(+). Its pathway is cell wall biogenesis; peptidoglycan biosynthesis. Functionally, catalyzes the addition of meso-diaminopimelic acid to the nucleotide precursor UDP-N-acetylmuramoyl-L-alanyl-D-glutamate (UMAG) in the biosynthesis of bacterial cell-wall peptidoglycan. The sequence is that of UDP-N-acetylmuramoyl-L-alanyl-D-glutamate--2,6-diaminopimelate ligase from Synechocystis sp. (strain ATCC 27184 / PCC 6803 / Kazusa).